Reading from the N-terminus, the 31-residue chain is Cyclotide cter-E (31 aa).

Positions 1–31 form a cross-link, cyclopeptide (Gly-Asp); it reads GIPCAESCVWIPCTVTALLGCSCKDKVCYLD. 3 disulfides stabilise this stretch: C4–C21, C8–C23, and C13–C28.

Post-translationally, contains 3 disulfide bonds. This is a cyclic peptide.

Probably participates in a plant defense mechanism. The sequence is that of Cyclotide cter-E from Clitoria ternatea (Butterfly pea).